The primary structure comprises 231 residues: Maleylacetoacetate isomerase maiA (231 aa).

The GST N-terminal domain maps to 7-93 (PKVTLYTYFR…YLEEITPASS (87 aa)). Residues 102–224 (NPEARAVVRT…HWRTQPDTPE (123 aa)) form the GST C-terminal domain.

Belongs to the GST superfamily. Zeta family.

It carries out the reaction 4-maleylacetoacetate = 4-fumarylacetoacetate. It functions in the pathway amino-acid degradation; L-phenylalanine degradation; acetoacetate and fumarate from L-phenylalanine: step 5/6. Maleylacetoacetate isomerase; part of the L-tyrosine degradation gene cluster that mediates the biosynthesis of the brownish pigment pyomelanin as an alternative melanin. The 4-hydroxyphenylpyruvate dioxygenase hppD catalyzes the conversion of 4-hydroxyphenylpyruvate to homogentisic acid (HGA). The protein hmgX is crucial for this conversion and thus, probably functions as an accessory factor to mediate specific activity of hppD. The homogentisate 1,2-dioxygenase hmgA is then involved in the cleavage of the aromatic ring of HGA and its conversion to 4-maleylacetoacetate. When hmgA activity is lowered by the cell wall integrity (CWI) signaling pathway, HGA accumulates and leads to the production of pyomelanin through benzoquinone acetic acid after oxidation and polymerization. On the opposite, in non-stress conditions, both hppD and hmgA activities are balanced and HGA is degraded into 4-maleylacetoacetate. 4-maleylacetoacetate is further converted to 4-fumarylacetoacetate by the maleylacetoacetate isomerase maiA, which is degraded into fumarate and acetoacetate by the fumarylacetoacetase fahA. The protein is Maleylacetoacetate isomerase maiA of Aspergillus fumigatus (strain ATCC MYA-4609 / CBS 101355 / FGSC A1100 / Af293) (Neosartorya fumigata).